The following is a 181-amino-acid chain: Probable integrase/recombinase YoeC (181 aa).

The Tyr recombinase domain occupies 3-176 (IVQPIRSLEK…DEDTTRAAYK (174 aa)). Catalysis depends on residues Arg40, Lys64, His128, Arg131, and His154. The active-site O-(3'-phospho-DNA)-tyrosine intermediate is the Tyr163.

This sequence belongs to the 'phage' integrase family.

The protein is Probable integrase/recombinase YoeC (yoeC) of Bacillus subtilis (strain 168).